Reading from the N-terminus, the 419-residue chain is MNIIDELEWRGAVNQQTDEEGLRKLVEEKKISLYCGVDPTGDSMHIGHLIPFMMMKRFQLAGHQPVILIGGATGTIGDPSGRQSERQLQTLEVVQHNVDALTAQMKKLFDFGGNSEVKMVNNYDWTHEINIIEFLRDYGKNFSINSMLAKDIVASRLDTGISFTEFTYQILQAMDFHHLYTKEDVQLQIGGSDQWGNITSGLDLIRKLEGHEAKVFGLTIPLLLKSDGTKFGKSAGGAVWLDPEKTTPFEFYQFWVNTDDRDVVKYLKYFTFLTKERIDELAVKVETEPHKREAQKVLAEEMTKFVHGEEALLQAVKITAALFSGDIKSLTADEIEQGFKEMPTFQSSKETKNIVEWLVDLGIEPSRRQAREDINNGAISMNGEKVTDVGTDVTVENSFDGRFIIIRKGKKNYSLVKLG.

Tyrosine 34 contributes to the L-tyrosine binding site. A 'HIGH' region motif is present at residues 39-48; that stretch reads PTGDSMHIGH. L-tyrosine-binding residues include tyrosine 168 and glutamine 172. Positions 230–234 match the 'KMSKS' region motif; it reads KFGKS. Residue lysine 233 coordinates ATP. Residues 352–418 enclose the S4 RNA-binding domain; that stretch reads KNIVEWLVDL…GKKNYSLVKL (67 aa).

This sequence belongs to the class-I aminoacyl-tRNA synthetase family. TyrS type 1 subfamily. Homodimer.

It localises to the cytoplasm. It catalyses the reaction tRNA(Tyr) + L-tyrosine + ATP = L-tyrosyl-tRNA(Tyr) + AMP + diphosphate + H(+). Its function is as follows. Catalyzes the attachment of tyrosine to tRNA(Tyr) in a two-step reaction: tyrosine is first activated by ATP to form Tyr-AMP and then transferred to the acceptor end of tRNA(Tyr). This Bacillus thuringiensis subsp. konkukian (strain 97-27) protein is Tyrosine--tRNA ligase 2.